The chain runs to 180 residues: Small ribosomal subunit protein uS5 (180 aa).

Positions 1 to 20 are disordered; the sequence is MAKMQGRMQGKVAPGDDRGD. The 64-residue stretch at 22–85 folds into the S5 DRBM domain; it reads LKEKMVAINR…DEARRKMIKV (64 aa).

This sequence belongs to the universal ribosomal protein uS5 family. Part of the 30S ribosomal subunit. Contacts proteins S4 and S8.

Its function is as follows. With S4 and S12 plays an important role in translational accuracy. Functionally, located at the back of the 30S subunit body where it stabilizes the conformation of the head with respect to the body. This chain is Small ribosomal subunit protein uS5, found in Nitrosospira multiformis (strain ATCC 25196 / NCIMB 11849 / C 71).